Reading from the N-terminus, the 307-residue chain is Aspartate carbamoyltransferase catalytic subunit (307 aa).

Carbamoyl phosphate-binding residues include Arg-59 and Thr-60. L-aspartate is bound at residue Lys-87. Arg-109, His-137, and Gln-140 together coordinate carbamoyl phosphate. L-aspartate contacts are provided by Arg-173 and Arg-223. Positions 266 and 267 each coordinate carbamoyl phosphate.

Belongs to the aspartate/ornithine carbamoyltransferase superfamily. ATCase family. As to quaternary structure, heterododecamer (2C3:3R2) of six catalytic PyrB chains organized as two trimers (C3), and six regulatory PyrI chains organized as three dimers (R2).

The catalysed reaction is carbamoyl phosphate + L-aspartate = N-carbamoyl-L-aspartate + phosphate + H(+). The protein operates within pyrimidine metabolism; UMP biosynthesis via de novo pathway; (S)-dihydroorotate from bicarbonate: step 2/3. In terms of biological role, catalyzes the condensation of carbamoyl phosphate and aspartate to form carbamoyl aspartate and inorganic phosphate, the committed step in the de novo pyrimidine nucleotide biosynthesis pathway. This chain is Aspartate carbamoyltransferase catalytic subunit, found in Helicobacter pylori (strain ATCC 700392 / 26695) (Campylobacter pylori).